The primary structure comprises 312 residues: Porphobilinogen deaminase (312 aa).

The residue at position 243 (C243) is an S-(dipyrrolylmethanemethyl)cysteine.

Belongs to the HMBS family. Monomer. Dipyrromethane is required as a cofactor.

The enzyme catalyses 4 porphobilinogen + H2O = hydroxymethylbilane + 4 NH4(+). It participates in porphyrin-containing compound metabolism; protoporphyrin-IX biosynthesis; coproporphyrinogen-III from 5-aminolevulinate: step 2/4. Its function is as follows. Tetrapolymerization of the monopyrrole PBG into the hydroxymethylbilane pre-uroporphyrinogen in several discrete steps. The sequence is that of Porphobilinogen deaminase from Vibrio vulnificus (strain CMCP6).